The following is a 188-amino-acid chain: Threonylcarbamoyl-AMP synthase (188 aa).

In terms of domain architecture, YrdC-like spans glutamine 3–glutamine 188.

The protein belongs to the SUA5 family. TsaC subfamily.

It is found in the cytoplasm. The enzyme catalyses L-threonine + hydrogencarbonate + ATP = L-threonylcarbamoyladenylate + diphosphate + H2O. Its function is as follows. Required for the formation of a threonylcarbamoyl group on adenosine at position 37 (t(6)A37) in tRNAs that read codons beginning with adenine. Catalyzes the conversion of L-threonine, HCO(3)(-)/CO(2) and ATP to give threonylcarbamoyl-AMP (TC-AMP) as the acyladenylate intermediate, with the release of diphosphate. The protein is Threonylcarbamoyl-AMP synthase of Shewanella sp. (strain ANA-3).